The primary structure comprises 385 residues: T-box transcription factor TBX10 (385 aa).

Residues Thr22–Arg61 form a disordered region. Residues Leu69 to Glu252 constitute a DNA-binding region (T-box).

It is found in the nucleus. In terms of biological role, probable transcriptional regulator involved in developmental processes. The sequence is that of T-box transcription factor TBX10 (TBX10) from Homo sapiens (Human).